The sequence spans 118 residues: Large ribosomal subunit protein bL20 (118 aa).

Belongs to the bacterial ribosomal protein bL20 family.

In terms of biological role, binds directly to 23S ribosomal RNA and is necessary for the in vitro assembly process of the 50S ribosomal subunit. It is not involved in the protein synthesizing functions of that subunit. The protein is Large ribosomal subunit protein bL20 of Francisella tularensis subsp. holarctica (strain FTNF002-00 / FTA).